Here is a 411-residue protein sequence, read N- to C-terminus: Heterogeneous nuclear ribonucleoprotein 1 (411 aa).

Residues 6–82 (GKLFVGGISW…REVDVKRAMS (77 aa)) enclose the RRM 1 domain. Disordered regions lie at residues 81–103 (MSREEQQVSGRTGNLNTSRSSGG), 183–221 (KRALPKDANPGGGGRSMGGGGSGGYQGYGGNESSYDGRM), and 358–411 (AAYG…RQGQ). Positions 87 to 101 (QVSGRTGNLNTSRSS) are enriched in polar residues. The RRM 2 domain occupies 110 to 187 (KKIFVGGLPP…KQVEVKRALP (78 aa)). 3 stretches are compositionally biased toward gly residues: residues 192–212 (PGGGGRSMGGGGSGGYQGYGG), 362–387 (VVGGRPSGGGSNNPGSGGYMGGGYGD), and 397–411 (GYGGGYNDGQGRQGQ). Residues 341–390 (GYGYGGYSGSDSGYGNQAAYGVVGGRPSGGGSNNPGSGGYMGGGYGDGSW) are nuclear targeting sequence (M9).

Component of the spliceosome. Interacts with TRN1.

The protein localises to the nucleus. It is found in the cytoplasm. Its function is as follows. Involved with pre-mRNA processing. Forms complexes (ribonucleosomes) with at least 20 other different hnRNP and heterogeneous nuclear RNA in the nucleus. Functionally, involved in the packaging of pre-mRNA into hnRNP particles, transport of poly(A) mRNA from the nucleus to the cytoplasm and may modulate splice site selection. This Arabidopsis thaliana (Mouse-ear cress) protein is Heterogeneous nuclear ribonucleoprotein 1 (RNP1).